A 336-amino-acid polypeptide reads, in one-letter code: Ferredoxin--NADP reductase 1 (336 aa).

Residues E37, K45, F50, V90, L125, D287, and T328 each coordinate FAD.

The protein belongs to the ferredoxin--NADP reductase type 2 family. Homodimer. FAD is required as a cofactor.

The catalysed reaction is 2 reduced [2Fe-2S]-[ferredoxin] + NADP(+) + H(+) = 2 oxidized [2Fe-2S]-[ferredoxin] + NADPH. The sequence is that of Ferredoxin--NADP reductase 1 from Bacillus velezensis (strain DSM 23117 / BGSC 10A6 / LMG 26770 / FZB42) (Bacillus amyloliquefaciens subsp. plantarum).